The primary structure comprises 323 residues: Zinc finger C2HC domain-containing protein 1A (323 aa).

The C2HC/C3H-type 1 zinc-finger motif lies at E14–K43. C18, C21, H33, and C37 together coordinate Zn(2+). Positions T42 to R81 are disordered. The span at T47–G57 shows a compositional bias: basic and acidic residues. The C2HC/C3H-type 2 zinc finger occupies D117–R146. Zn(2+) contacts are provided by C121, C124, H136, and C140. A disordered region spans residues N149 to K258. The segment covering S177–T197 has biased composition (polar residues). A compositionally biased stretch (low complexity) spans V198–G214. A Phosphoserine modification is found at S221. At T242 the chain carries Phosphothreonine. A Phosphoserine modification is found at S290.

Belongs to the ZC2HC1 family. It depends on Zn(2+) as a cofactor.

The sequence is that of Zinc finger C2HC domain-containing protein 1A (ZC2HC1A) from Bos taurus (Bovine).